Consider the following 153-residue polypeptide: S-ribosylhomocysteine lyase (153 aa).

Positions 57, 61, and 124 each coordinate Fe cation.

The protein belongs to the LuxS family. Homodimer. The cofactor is Fe cation.

The catalysed reaction is S-(5-deoxy-D-ribos-5-yl)-L-homocysteine = (S)-4,5-dihydroxypentane-2,3-dione + L-homocysteine. In terms of biological role, involved in the synthesis of autoinducer 2 (AI-2) which is secreted by bacteria and is used to communicate both the cell density and the metabolic potential of the environment. The regulation of gene expression in response to changes in cell density is called quorum sensing. Catalyzes the transformation of S-ribosylhomocysteine (RHC) to homocysteine (HC) and 4,5-dihydroxy-2,3-pentadione (DPD). This is S-ribosylhomocysteine lyase from Oceanobacillus iheyensis (strain DSM 14371 / CIP 107618 / JCM 11309 / KCTC 3954 / HTE831).